Consider the following 304-residue polypeptide: tRNA dimethylallyltransferase (304 aa).

Residue 9-16 participates in ATP binding; sequence APTAAGKS. Residue 11–16 participates in substrate binding; sequence TAAGKS.

This sequence belongs to the IPP transferase family. Monomer. Requires Mg(2+) as cofactor.

The catalysed reaction is adenosine(37) in tRNA + dimethylallyl diphosphate = N(6)-dimethylallyladenosine(37) in tRNA + diphosphate. Catalyzes the transfer of a dimethylallyl group onto the adenine at position 37 in tRNAs that read codons beginning with uridine, leading to the formation of N6-(dimethylallyl)adenosine (i(6)A). The protein is tRNA dimethylallyltransferase of Deinococcus geothermalis (strain DSM 11300 / CIP 105573 / AG-3a).